Here is a 1604-residue protein sequence, read N- to C-terminus: Calmodulin-regulated spectrin-associated protein 1 (1604 aa).

Position 216 is a phosphoserine (Ser216). A Calponin-homology (CH) domain is found at 235–350 (PVDFARVVRY…FIAELFWWFE (116 aa)). Ser390, Ser394, and Ser435 each carry phosphoserine. A disordered region spans residues 394 to 413 (SPAAMSPADLPPSTQPLTEG). The interval 444–491 (RQKQQKVSQAEEIPDQRHRSNSLTRADGQPRGAAIAWPDKKNRPVSQP) is disordered. Thr531 is modified (phosphothreonine). Ser571, Ser574, Ser581, Ser593, Ser607, Ser647, Ser739, Ser745, Ser755, and Ser757 each carry phosphoserine. Residues 642 to 671 (MAKRPSEGSQPLVRKKVTGSHGSRDLNRTF) are disordered. Positions 784–806 (EEESAKLQEDMKVKEHEDKDDAS) are enriched in basic and acidic residues. 2 disordered regions span residues 784-824 (EEES…SMSM) and 842-888 (LNSC…KDPA). Low complexity-rich tracts occupy residues 813-824 (LSTTSQLSSMSM) and 847-858 (TKSSTSSSQKTT). Residues 874–886 (QKREQSPSRHSKD) show a composition bias toward basic and acidic residues. The interval 888–909 (ASLLASELVQLHMQLEEKRRAI) is sufficient for interaction with SPTBN1. 2 coiled-coil regions span residues 890–926 (LLAS…QRLK) and 1026–1058 (DVNE…QEQL). A sufficient for interaction with calmodulin region spans residues 920-939 (SARQRLKLGKAAFLHVVKKG). Disordered stretches follow at residues 1085 to 1163 (FVEP…GELP), 1246 to 1271 (PDED…KPGV), and 1298 to 1448 (RKAE…DRDW). Ser1090 is subject to Phosphoserine. The segment covering 1113 to 1124 (RPAELKVPKDRQ) has biased composition (basic and acidic residues). Over residues 1125 to 1137 (QGCSRSKTPTPSV) the composition is skewed to polar residues. At Ser1154 the chain carries Phosphoserine. Composition is skewed to basic and acidic residues over residues 1246 to 1258 (PDED…HESS) and 1298 to 1348 (RKAE…EYLR). Residues 1286-1357 (AKKRAAFLLK…RRKQQQALEE (72 aa)) adopt a coiled-coil conformation. The segment covering 1363–1374 (PKSKPKKPRPKS) has biased composition (basic residues). The span at 1382–1394 (SDSGTKCSSTPDN) shows a compositional bias: polar residues. Residues 1395 to 1412 (LSQTHSGSSLSLASAATT) show a composition bias toward low complexity. 2 positions are modified to phosphoserine: Ser1400 and Ser1429. The CKK domain occupies 1465–1599 (GPKLFKEPSS…QPKRPTVPKK (135 aa)). Tyr1539 is subject to Phosphotyrosine.

The protein belongs to the CAMSAP1 family. As to quaternary structure, interacts with spectrin via SPTBN1; the interaction is direct. Interacts with calmodulin; calcium-dependent it prevents interaction with spectrin. As to expression, in brain, specifically expressed in astrocytes (at protein level).

It is found in the cytoplasm. The protein localises to the cytoskeleton. Key microtubule-organizing protein that specifically binds the minus-end of non-centrosomal microtubules and regulates their dynamics and organization. Specifically recognizes growing microtubule minus-ends and stabilizes microtubules. Acts on free microtubule minus-ends that are not capped by microtubule-nucleating proteins or other factors and protects microtubule minus-ends from depolymerization. In contrast to CAMSAP2 and CAMSAP3, tracks along the growing tips of minus-end microtubules without significantly affecting the polymerization rate: binds at the very tip of the microtubules minus-end and acts as a minus-end tracking protein (-TIP) that dissociates from microtubules after allowing tubulin incorporation. Through interaction with spectrin may regulate neurite outgrowth. This chain is Calmodulin-regulated spectrin-associated protein 1 (Camsap1), found in Rattus norvegicus (Rat).